The following is a 944-amino-acid chain: Protein unc-45 homolog A (944 aa).

The tract at residues Met-1–Arg-25 is disordered. TPR repeat units follow at residues Ala-21–Pro-54, Ala-58–Asp-91, and Val-92–Asn-125. Lys-70 bears the N6-acetyllysine mark. Lys-483 is modified (N6-acetyllysine).

Interacts with PGR isoforms A and B as well as with NR3C1 in the absence of ligand, and with HSP90AB1. Binding to HSP90AB1 involves 2 UNC45A monomers per HSP90AB1 dimer.

The protein resides in the cytoplasm. Its subcellular location is the perinuclear region. The protein localises to the nucleus. Functionally, may act as co-chaperone for HSP90 (Potential). Prevents the stimulation of HSP90AB1 ATPase activity by AHSA1. Positive factor in promoting PGR function in the cell. May be necessary for proper folding of myosin (Potential). Necessary for normal cell proliferation. Necessary for normal myotube formation and myosin accumulation during muscle cell development. May play a role in erythropoiesis in stroma cells in the spleen. In Rattus norvegicus (Rat), this protein is Protein unc-45 homolog A (Unc45a).